Reading from the N-terminus, the 104-residue chain is Large ribosomal subunit protein uL23 (104 aa).

It belongs to the universal ribosomal protein uL23 family. In terms of assembly, part of the 50S ribosomal subunit. Contacts protein L29, and trigger factor when it is bound to the ribosome.

Its function is as follows. One of the early assembly proteins it binds 23S rRNA. One of the proteins that surrounds the polypeptide exit tunnel on the outside of the ribosome. Forms the main docking site for trigger factor binding to the ribosome. In Polynucleobacter asymbioticus (strain DSM 18221 / CIP 109841 / QLW-P1DMWA-1) (Polynucleobacter necessarius subsp. asymbioticus), this protein is Large ribosomal subunit protein uL23.